We begin with the raw amino-acid sequence, 160 residues long: Thy-1 membrane glycoprotein (160 aa).

A signal peptide spans M1 to C19. Q20 is modified (pyrrolidone carboxylic acid). The 101-residue stretch at Q20–T120 folds into the Ig-like V-type domain. 2 disulfides stabilise this stretch: C28/C129 and C38/C103. Residues N42, N78, and N118 are each glycosylated (N-linked (GlcNAc...) asparagine). Residue C129 is the site of GPI-anchor amidated cysteine attachment. A propeptide spans V130–L160 (removed in mature form). N-linked (GlcNAc...) asparagine glycosylation is present at N138.

Post-translationally, the N-terminus is blocked. In terms of tissue distribution, forebrain, cerebellum and tectum.

The protein resides in the cell membrane. In terms of biological role, may play a role in cell-cell or cell-ligand interactions during synaptogenesis and other events in the brain. In Gallus gallus (Chicken), this protein is Thy-1 membrane glycoprotein (THY1).